Reading from the N-terminus, the 950-residue chain is Protocadherin alpha-9 (950 aa).

A signal peptide spans 1–29; it reads MLYSSRGDPEGQPLLLSLLILAMWVVGSG. Cadherin domains follow at residues 30–133, 134–242, 243–350, 351–455, 456–565, and 588–678; these read QLHY…PPVF, PATQ…APVF, DRTL…APQL, TIKT…APAF, AQSE…APAL, and GVVV…APKS. The Extracellular portion of the chain corresponds to 30–697; sequence QLHYSVPEEA…GPEVTLVDVN (668 aa). Asn254 and Asn265 each carry an N-linked (GlcNAc...) asparagine glycan. Asn548 carries N-linked (GlcNAc...) asparagine glycosylation. Residues 698–718 traverse the membrane as a helical segment; sequence VYLIIAICAVSSLLVLTLLLY. Topologically, residues 719-950 are cytoplasmic; it reads TVLRCSAMPT…GNSTTDNSDQ (232 aa). One copy of the PXXP 1 repeat lies at 734 to 737; the sequence is PGKP. Positions 734-894 are 5 X 4 AA repeats of P-X-X-P; the sequence is PGKPTLVCSS…PDKFIIPGSP (161 aa). Disordered regions lie at residues 770-808, 827-856, and 871-950; these read MAFSPGLSPCAGSTERTGEPSASSDSTGKPRQPNPDWRY, ILRAGPGGPDQQWPTVSSATPEPEAGEVSP, and YGPG…NSDQ. Residues 789 to 798 are compositionally biased toward polar residues; that stretch reads PSASSDSTGK. PXXP repeat units lie at residues 799-802, 832-835, 873-876, and 891-894; these read PRQP, PGGP, PGNP, and PGSP. Over residues 909–923 the composition is skewed to basic and acidic residues; sequence DKSDFITFGKKEETK.

The protein localises to the cell membrane. Potential calcium-dependent cell-adhesion protein. May be involved in the establishment and maintenance of specific neuronal connections in the brain. The sequence is that of Protocadherin alpha-9 (PCDHA9) from Homo sapiens (Human).